The following is a 206-amino-acid chain: Large ribosomal subunit protein uL4 (206 aa).

It belongs to the universal ribosomal protein uL4 family. In terms of assembly, part of the 50S ribosomal subunit.

Functionally, one of the primary rRNA binding proteins, this protein initially binds near the 5'-end of the 23S rRNA. It is important during the early stages of 50S assembly. It makes multiple contacts with different domains of the 23S rRNA in the assembled 50S subunit and ribosome. In terms of biological role, forms part of the polypeptide exit tunnel. The sequence is that of Large ribosomal subunit protein uL4 from Rhodopseudomonas palustris (strain BisA53).